A 312-amino-acid chain; its full sequence is Putative 1-aminocyclopropane-1-carboxylate deaminase (312 aa).

K42 bears the N6-(pyridoxal phosphate)lysine mark.

The protein belongs to the ACC deaminase/D-cysteine desulfhydrase family. The cofactor is pyridoxal 5'-phosphate.

The enzyme catalyses 1-aminocyclopropane-1-carboxylate + H2O = 2-oxobutanoate + NH4(+). This chain is Putative 1-aminocyclopropane-1-carboxylate deaminase, found in Thermotoga maritima (strain ATCC 43589 / DSM 3109 / JCM 10099 / NBRC 100826 / MSB8).